A 179-amino-acid chain; its full sequence is MIP18 family protein C144.16 (179 aa).

Residues 1 to 26 (MSANLQNENPEVKELNQLPSRVEEEE) are disordered.

This sequence belongs to the MIP18 family.

May play a role in chromosome segregation through establishment of sister chromatid cohesion. This Schizosaccharomyces pombe (strain 972 / ATCC 24843) (Fission yeast) protein is MIP18 family protein C144.16.